Here is a 1191-residue protein sequence, read N- to C-terminus: DNA-directed RNA polymerase subunit beta (1191 aa).

Residues 1164 to 1191 (EEEDLQPADALNIAPQPDTEEEPVESFE) form a disordered region. Residues 1181–1191 (DTEEEPVESFE) are compositionally biased toward acidic residues.

This sequence belongs to the RNA polymerase beta chain family. In terms of assembly, the RNAP catalytic core consists of 2 alpha, 1 beta, 1 beta' and 1 omega subunit. When a sigma factor is associated with the core the holoenzyme is formed, which can initiate transcription.

It carries out the reaction RNA(n) + a ribonucleoside 5'-triphosphate = RNA(n+1) + diphosphate. DNA-dependent RNA polymerase catalyzes the transcription of DNA into RNA using the four ribonucleoside triphosphates as substrates. In Lysinibacillus sphaericus (strain C3-41), this protein is DNA-directed RNA polymerase subunit beta.